The primary structure comprises 346 residues: Cell division protein ZipA (346 aa).

Over 1 to 6 (MEDLQL) the chain is Periplasmic. The chain crosses the membrane as a helical span at residues 7-27 (VLFVLGAIAIVAVLVHGFWSI). Over 28–346 (RRQQPKSLKD…DYLHRIRANA (319 aa)) the chain is Cytoplasmic. The interval 116 to 146 (EPSMAQPDFSLQSPTAKEQHRGPKASRQEPV) is disordered.

This sequence belongs to the ZipA family. In terms of assembly, interacts with FtsZ via their C-terminal domains.

Its subcellular location is the cell inner membrane. Its function is as follows. Essential cell division protein that stabilizes the FtsZ protofilaments by cross-linking them and that serves as a cytoplasmic membrane anchor for the Z ring. Also required for the recruitment to the septal ring of downstream cell division proteins. This Shewanella sp. (strain ANA-3) protein is Cell division protein ZipA.